Reading from the N-terminus, the 100-residue chain is Glutamyl-tRNA(Gln) amidotransferase subunit C (100 aa).

Belongs to the GatC family. In terms of assembly, heterotrimer of A, B and C subunits.

It carries out the reaction L-glutamyl-tRNA(Gln) + L-glutamine + ATP + H2O = L-glutaminyl-tRNA(Gln) + L-glutamate + ADP + phosphate + H(+). It catalyses the reaction L-aspartyl-tRNA(Asn) + L-glutamine + ATP + H2O = L-asparaginyl-tRNA(Asn) + L-glutamate + ADP + phosphate + 2 H(+). Allows the formation of correctly charged Asn-tRNA(Asn) or Gln-tRNA(Gln) through the transamidation of misacylated Asp-tRNA(Asn) or Glu-tRNA(Gln) in organisms which lack either or both of asparaginyl-tRNA or glutaminyl-tRNA synthetases. The reaction takes place in the presence of glutamine and ATP through an activated phospho-Asp-tRNA(Asn) or phospho-Glu-tRNA(Gln). The polypeptide is Glutamyl-tRNA(Gln) amidotransferase subunit C (Rickettsia conorii (strain ATCC VR-613 / Malish 7)).